The sequence spans 61 residues: Large ribosomal subunit protein uL30 (61 aa).

Belongs to the universal ribosomal protein uL30 family. In terms of assembly, part of the 50S ribosomal subunit.

The protein is Large ribosomal subunit protein uL30 of Thermobifida fusca (strain YX).